A 633-amino-acid polypeptide reads, in one-letter code: Glutamyl-tRNA(Gln) amidotransferase subunit E (633 aa).

Belongs to the GatB/GatE family. GatE subfamily. In terms of assembly, heterodimer of GatD and GatE.

It carries out the reaction L-glutamyl-tRNA(Gln) + L-glutamine + ATP + H2O = L-glutaminyl-tRNA(Gln) + L-glutamate + ADP + phosphate + H(+). Functionally, allows the formation of correctly charged Gln-tRNA(Gln) through the transamidation of misacylated Glu-tRNA(Gln) in organisms which lack glutaminyl-tRNA synthetase. The reaction takes place in the presence of glutamine and ATP through an activated gamma-phospho-Glu-tRNA(Gln). The GatDE system is specific for glutamate and does not act on aspartate. The chain is Glutamyl-tRNA(Gln) amidotransferase subunit E from Methanococcus vannielii (strain ATCC 35089 / DSM 1224 / JCM 13029 / OCM 148 / SB).